The following is a 565-amino-acid chain: Phosphoenolpyruvate-protein phosphotransferase (565 aa).

Histidine 191 (tele-phosphohistidine intermediate) is an active-site residue. Phosphoenolpyruvate-binding residues include arginine 289 and arginine 325. Mg(2+)-binding residues include glutamate 427 and aspartate 451. Residues 450–451 (ND) and arginine 461 contribute to the phosphoenolpyruvate site. Catalysis depends on cysteine 498, which acts as the Proton donor.

It belongs to the PEP-utilizing enzyme family. As to quaternary structure, homodimer. It depends on Mg(2+) as a cofactor.

It localises to the cytoplasm. The catalysed reaction is L-histidyl-[protein] + phosphoenolpyruvate = N(pros)-phospho-L-histidyl-[protein] + pyruvate. General (non sugar-specific) component of the phosphoenolpyruvate-dependent sugar phosphotransferase system (sugar PTS). This major carbohydrate active-transport system catalyzes the phosphorylation of incoming sugar substrates concomitantly with their translocation across the cell membrane. Enzyme I transfers the phosphoryl group from phosphoenolpyruvate (PEP) to the phosphoryl carrier protein (HPr). This chain is Phosphoenolpyruvate-protein phosphotransferase (ptsI), found in Haloferax volcanii (strain ATCC 29605 / DSM 3757 / JCM 8879 / NBRC 14742 / NCIMB 2012 / VKM B-1768 / DS2) (Halobacterium volcanii).